The chain runs to 530 residues: Phosphoenolpyruvate carboxykinase (ATP) (530 aa).

Positions 58, 195, and 201 each coordinate substrate. Residues Lys201, His220, and 236–244 contribute to the ATP site; that span reads GLSGTGKTT. Mn(2+) is bound by residues Lys201 and His220. Asp257 lines the Mn(2+) pocket. Residues Glu285, Arg321, 440–441, and Thr446 each bind ATP; that span reads RI. Arg321 is a binding site for substrate.

This sequence belongs to the phosphoenolpyruvate carboxykinase (ATP) family. Mn(2+) serves as cofactor.

The protein localises to the cytoplasm. The enzyme catalyses oxaloacetate + ATP = phosphoenolpyruvate + ADP + CO2. The protein operates within carbohydrate biosynthesis; gluconeogenesis. Involved in the gluconeogenesis. Catalyzes the conversion of oxaloacetate (OAA) to phosphoenolpyruvate (PEP) through direct phosphoryl transfer between the nucleoside triphosphate and OAA. The chain is Phosphoenolpyruvate carboxykinase (ATP) from Staphylococcus epidermidis (strain ATCC 35984 / DSM 28319 / BCRC 17069 / CCUG 31568 / BM 3577 / RP62A).